The primary structure comprises 181 residues: NADH-quinone oxidoreductase subunit B (181 aa).

4 residues coordinate [4Fe-4S] cluster: Cys-45, Cys-46, Cys-111, and Cys-140.

Belongs to the complex I 20 kDa subunit family. NDH-1 is composed of 14 different subunits. Subunits NuoB, C, D, E, F, and G constitute the peripheral sector of the complex. [4Fe-4S] cluster serves as cofactor.

It is found in the cell inner membrane. It catalyses the reaction a quinone + NADH + 5 H(+)(in) = a quinol + NAD(+) + 4 H(+)(out). Its function is as follows. NDH-1 shuttles electrons from NADH, via FMN and iron-sulfur (Fe-S) centers, to quinones in the respiratory chain. The immediate electron acceptor for the enzyme in this species is believed to be a menaquinone. Couples the redox reaction to proton translocation (for every two electrons transferred, four hydrogen ions are translocated across the cytoplasmic membrane), and thus conserves the redox energy in a proton gradient. This chain is NADH-quinone oxidoreductase subunit B, found in Flavobacterium psychrophilum (strain ATCC 49511 / DSM 21280 / CIP 103535 / JIP02/86).